The following is a 62-amino-acid chain: Coiled-coil domain-containing protein YLR146W-A (62 aa).

Residues 14-49 (EHARMLQNEIQQLFAQLRDTNSQIRCDLNEFEQIKE) adopt a coiled-coil conformation.

This is Coiled-coil domain-containing protein YLR146W-A from Saccharomyces cerevisiae (strain ATCC 204508 / S288c) (Baker's yeast).